The chain runs to 309 residues: Glutaminase (309 aa).

Residues Ser-64, Asn-114, Glu-160, Asn-167, Tyr-191, Tyr-243, and Val-261 each contribute to the substrate site.

Belongs to the glutaminase family. Homotetramer.

The catalysed reaction is L-glutamine + H2O = L-glutamate + NH4(+). The polypeptide is Glutaminase (Azorhizobium caulinodans (strain ATCC 43989 / DSM 5975 / JCM 20966 / LMG 6465 / NBRC 14845 / NCIMB 13405 / ORS 571)).